The primary structure comprises 371 residues: 4-hydroxy-3-methylbut-2-en-1-yl diphosphate synthase (flavodoxin) (371 aa).

The [4Fe-4S] cluster site is built by Cys268, Cys271, Cys303, and Glu310.

This sequence belongs to the IspG family. It depends on [4Fe-4S] cluster as a cofactor.

It carries out the reaction (2E)-4-hydroxy-3-methylbut-2-enyl diphosphate + oxidized [flavodoxin] + H2O + 2 H(+) = 2-C-methyl-D-erythritol 2,4-cyclic diphosphate + reduced [flavodoxin]. The protein operates within isoprenoid biosynthesis; isopentenyl diphosphate biosynthesis via DXP pathway; isopentenyl diphosphate from 1-deoxy-D-xylulose 5-phosphate: step 5/6. In terms of biological role, converts 2C-methyl-D-erythritol 2,4-cyclodiphosphate (ME-2,4cPP) into 1-hydroxy-2-methyl-2-(E)-butenyl 4-diphosphate. In Macrococcus caseolyticus (strain JCSC5402) (Macrococcoides caseolyticum), this protein is 4-hydroxy-3-methylbut-2-en-1-yl diphosphate synthase (flavodoxin).